The primary structure comprises 337 residues: MNDLPPIANLISNILFVLLIITFLYALCSRFVSDKTLYDYTILPTNDPEKINYYIEPSPSPKEKIPFPTVFSPSEVYTTFVVPAYNESKRITPMLDETVAYLERRASENPEFTWEIIVVNDGSKDNTAEIVTNYAFKHPQIRLLNQPKNMGKGAAVQAGCLHSRGELILMVDADGATKIDEFEELEKKIKSLTTINKEAIVVGSRAHLEGAEKANRTPLRKFLGLGFHMLITIAGVHGIKDTQCGFKLFTREAARWLFPNQHVQRWCFDPELLVIAQSRQMEVAEVPVEWNEIGDSKMKISGMIKMAIDLVQIAIYFRAGLWTVKDKADTPISDFEV.

The Lumenal portion of the chain corresponds to 1-6; sequence MNDLPP. Residues 7 to 27 form a helical membrane-spanning segment; the sequence is IANLISNILFVLLIITFLYAL. At 28 to 337 the chain is on the cytoplasmic side; the sequence is CSRFVSDKTL…ADTPISDFEV (310 aa).

The protein belongs to the glycosyltransferase 2 family.

It localises to the endoplasmic reticulum membrane. The enzyme catalyses a di-trans,poly-cis-dolichyl phosphate + UDP-alpha-D-glucose = a di-trans,poly-cis-dolichyl beta-D-glucosyl phosphate + UDP. It participates in protein modification; protein glycosylation. Its function is as follows. Dolichyl-phosphate beta-glucosyltransferase involved in the glycosylation of glycoproteins through the synthesis of dolichyl beta-D-glucosyl phosphate which serves as a sugar donor for transfer of three glucose residues to the Man-9-GlcNAc-2-PP-dolichol precursor to N-glycans. This Trichomonas vaginalis (strain ATCC PRA-98 / G3) protein is Dolichyl-phosphate beta-glucosyltransferase ALG5C.